Consider the following 156-residue polypeptide: Probable cyclic pyranopterin monophosphate synthase (156 aa).

Substrate-binding positions include 73-75 and 109-110; these read MCH and ME. Residue aspartate 124 is part of the active site.

It belongs to the MoaC family. As to quaternary structure, homohexamer; trimer of dimers.

It catalyses the reaction (8S)-3',8-cyclo-7,8-dihydroguanosine 5'-triphosphate = cyclic pyranopterin phosphate + diphosphate. It functions in the pathway cofactor biosynthesis; molybdopterin biosynthesis. Catalyzes the conversion of (8S)-3',8-cyclo-7,8-dihydroguanosine 5'-triphosphate to cyclic pyranopterin monophosphate (cPMP). The sequence is that of Probable cyclic pyranopterin monophosphate synthase from Archaeoglobus fulgidus (strain ATCC 49558 / DSM 4304 / JCM 9628 / NBRC 100126 / VC-16).